The following is a 229-amino-acid chain: Sperm flagellar protein 1 (229 aa).

One can recognise a Calponin-homology (CH) domain in the interval 7-115 (EETMQELYTW…TLRQKIEEKQ (109 aa)). The segment at 122 to 169 (ADLSQDQATQNNGNTHSDKGYKSNGTELSPRQGARVDPASKTHQGYAQ) is disordered. A compositionally biased stretch (polar residues) spans 123–136 (DLSQDQATQNNGNT). The segment at 178–229 (RFQLAEKEQTLILSQETIQILQAKLRRLEQLLLLKNVRIDDLTRRLQELEKK) is essential for homodimerization and microtubule bundling activity.

As to quaternary structure, homodimer.

The protein localises to the cytoplasm. The protein resides in the cytoskeleton. Its subcellular location is the cilium axoneme. It is found in the apical cell membrane. In terms of biological role, microtubule-associated protein involved in the stabilization of microtubules along the axis of migration during radial intercalation. Promotes the establishment and stabilization of an axis of microtubules required for the active migration of cells into the outer epithelium. Microtubule-associated protein that promotes microtubule bundling and stabilizes microtubules against depolymerization in response to cold shock. Essential for ciliary central apparatus formation which requires both its microtubule-binding and bundling activities. Regulates planar cell polarity signaling pathway and asymmetric microtubule accumulation in ciliated epithelia. The polypeptide is Sperm flagellar protein 1 (Xenopus laevis (African clawed frog)).